Consider the following 690-residue polypeptide: Subtilisin-like protease 1 (690 aa).

A signal peptide spans Met-1 to Gly-25. Residues Lys-26–Asp-219 constitute a propeptide, inhibition peptide. A disordered region spans residues Glu-99–Glu-131. Low complexity predominate over residues His-106–Asn-124. N-linked (GlcNAc...) asparagine glycosylation occurs at Asn-114. Residues Asn-147, Thr-150, and Pro-152 each contribute to the Ca(2+) site. Asn-173 is a glycosylation site (N-linked (GlcNAc...) asparagine). A Ca(2+)-binding site is contributed by Gly-207. A glycan (N-linked (GlcNAc...) asparagine) is linked at Asn-263. 2 disordered regions span residues His-266–Ser-286 and Asn-305–Lys-334. Over residues Asn-305–Ser-330 the composition is skewed to low complexity. N-linked (GlcNAc...) asparagine glycans are attached at residues Asn-319 and Asn-324. Glu-340 provides a ligand contact to Ca(2+). In terms of domain architecture, Peptidase S8 spans Gln-345–Val-663. Cystine bridges form between Cys-371–Cys-481 and Cys-460–Cys-477. The Charge relay system role is filled by Asp-374. 11 residues coordinate Ca(2+): Asp-383, Glu-394, Arg-398, Phe-401, Asp-402, Asp-403, Asp-404, Asn-406, Ile-408, Asp-410, and Asp-411. N-linked (GlcNAc...) asparagine glycosylation is present at Asn-419. His-430 serves as the catalytic Charge relay system. Ca(2+)-binding residues include Ile-441, Asn-444, Ile-446, and Val-448. N-linked (GlcNAc...) asparagine glycosylation is found at Asn-490, Asn-503, and Asn-522. The cysteines at positions 523 and 536 are disulfide-linked. N-linked (GlcNAc...) asparagine glycosylation occurs at Asn-605. The active-site Charge relay system is the Ser-608. Residue Asn-677 is glycosylated (N-linked (GlcNAc...) asparagine).

It belongs to the peptidase S8 family. As to quaternary structure, heterodimer between p54 form and prodomain p31; the interaction inhibits p54 catalytic activity. Heterodimer p31-p54 is monomeric at basic pH and dimeric at acidic pH; dimerization is driven by the N-terminal prodomain (p31). It depends on Ca(2+) as a cofactor. Post-translationally, the prodomain (p31) is cleaved, probably by autocatalysis, during the transport to or in the Golgi apparatus, and remains non-covalently associated with the p54 form as an inhibitor. p54 is further cleaved into the p47 form. This cleavage is likely occurring in the exoneme prior to egress and is mediated by PMX/plasmepsin X. The p54-to-p47 conversion can be also autocatalytic. Heterodimer p31-p54 is activated by cleavage of prodomain (p31) by the aspartic protease PMX; cleavage by PMX abolishes inhibitory capacity of p31. Primary autocatalytic processing of SUB1 is essential for parasite growth; the p54-to-p47 conversion is dispensable for SUB1 functions in the parasites. In terms of processing, the disulfide bond between Cys-523 and Cys-536 acts as a redox-sensitive disulfide switch. The oxidized form is required for catalytic activity. The relevance of N-glycosylation is not clear. In an insect expression system, SUB1 glycosylation appears to affect its processing into the active mature form suggesting that SUB1 may not be N-glycosylated in parasites.

The protein localises to the secreted. It localises to the parasitophorous vacuole lumen. It carries out the reaction Hydrolysis of proteins with broad specificity for peptide bonds, and a preference for a large uncharged residue in P1. Hydrolyzes peptide amides.. Its activity is regulated as follows. p54 and probably p47 forms are inhibited by the non-covalent interaction with the cleaved propeptide. Inhibited by subtilisin propeptide-like protein SUB1-ProM. Inhibited by 3,4-dichloroisocoumarin (DCI) and 4-(hydroxymercuri)benzoic acid (pHMB). Partially inhibited by chymostatin, leupeptin, phenylmethylsulfonyl fluoride (PMSF), and 4-(2-aminoethyl)benzenesulfonyl fluoride. Serine protease which plays an essential role in merozoite invasion of and egress from host erythrocytes by processing and activating various merozoite surface and parasitophorous vacuole proteins. Mediates the proteolytic maturation of serine proteases SERA4, SERA5 and SERA6 just prior to merozoite egress. Prior to merozoite egress, cleaves merozoite surface proteins MSP1, MSP6 and MSP7, which form the MSP1/6/7 complex, and thereby may prime the parasite cell surface for invasion of fresh erythrocytes. Prior to merozoite egress, cleaves MSRP2 converting it to MSRP2 p25 form, and RAP1 converting it to RAP1 p67 form. The polypeptide is Subtilisin-like protease 1 (Plasmodium falciparum).